The sequence spans 348 residues: UPF0283 membrane protein PBPRA2435 (348 aa).

A run of 3 helical transmembrane segments spans residues 71-91 (GLLI…VVSA), 97-117 (WLAL…ITAL), and 211-231 (EAAV…LVAW).

Belongs to the UPF0283 family.

The protein localises to the cell inner membrane. This Photobacterium profundum (strain SS9) protein is UPF0283 membrane protein PBPRA2435.